A 436-amino-acid polypeptide reads, in one-letter code: Transcriptional regulator dmxR14 (436 aa).

The span at 1-27 (MEEAETNTQVDSVPSNSVRSGAELSSK) shows a compositional bias: polar residues. A disordered region spans residues 1-32 (MEEAETNTQVDSVPSNSVRSGAELSSKSKLRD). Positions 34–61 (CHACARSKVRCPKQKPSCSRCEARGTTC) form a DNA-binding region, zn(2)-C6 fungal-type. The interval 67–136 (RRPGRRRETS…ITTVHNGPEN (70 aa)) is disordered. The segment covering 90–136 (SHANNRNSPSFSSTRSTLPSPIASDSNSNFTQPQNSSITTVHNGPEN) has biased composition (polar residues).

Its subcellular location is the nucleus. Transcriptional regulator; part of the gene cluster that mediates the biosynthesis of the dimeric xanthones cryptosporioptides. In Cryptosporiopsis sp. (strain 8999), this protein is Transcriptional regulator dmxR14.